Here is a 906-residue protein sequence, read N- to C-terminus: Ectonucleotide pyrophosphatase/phosphodiesterase family member 1 (906 aa).

Residues 1 to 25 (MERDGEQAGQGPRHGPAGNGRELES) are disordered. Topologically, residues 1 to 58 (MERDGEQAGQGPRHGPAGNGRELESPAAASLLAPMDLGEEPLEKAERARTAKDPNTYK) are cytoplasmic. S25 is subject to Phosphoserine. Residues 27–34 (AAASLLAP) carry the Di-leucine motif motif. Residues 59-79 (VLSLVLSVCVLTTILGCIFGL) traverse the membrane as a helical; Signal-anchor for type II membrane protein segment. Over 80-906 (KPSCAKEVKS…THLPIFSQED (827 aa)) the chain is Extracellular. 2 SMB domains span residues 86–126 (EVKS…VEPT) and 127–170 (HIWT…QEKK). 10 disulfides stabilise this stretch: C90–C104, C94–C122, C102–C115, C108–C114, C131–C148, C136–C166, C146–C159, C152–C158, C177–C223, and C185–C397. An N-linked (GlcNAc...) asparagine glycan is attached at N161. The tract at residues 173-573 (VEEACETIDA…APNNESHGSL (401 aa)) is phosphodiesterase. AMP is bound by residues D200, T238, and N259. D200 and T238 together coordinate Zn(2+). Residue T238 is the AMP-threonine intermediate of the active site. CMP contacts are provided by T238 and N259. DTMP is bound by residues T238 and N259. 2 residues coordinate GMP: T238 and N259. T238 is modified (phosphothreonine). N-linked (GlcNAc...) asparagine glycosylation occurs at N267. L272, K277, and Y322 together coordinate GMP. Residues K277 and Y322 each contribute to the AMP site. Residues K277 and Y322 each contribute to the CMP site. Y322 lines the dTMP pocket. N-linked (GlcNAc...) asparagine glycosylation occurs at N323. An AMP-binding site is contributed by D358. Residues D358, H362, D405, and H406 each coordinate Zn(2+). D358 is a binding site for CMP. A dTMP-binding site is contributed by D358. D358 is a binding site for GMP. H362 contacts 2',3'-cGAMP. H406 provides a ligand contact to AMP. H406 contributes to the CMP binding site. A dTMP-binding site is contributed by H406. H406 lines the GMP pocket. 6 cysteine pairs are disulfide-bonded: C413-C512, C462-C849, C596-C653, C607-C707, C609-C692, and C819-C829. Residue N459 is glycosylated (N-linked (GlcNAc...) asparagine). A 2',3'-cGAMP-binding site is contributed by S514. H517 lines the AMP pocket. Residue H517 participates in Zn(2+) binding. CMP is bound at residue H517. Residue H517 participates in dTMP binding. Residue H517 coordinates GMP. N-linked (GlcNAc...) asparagine glycans are attached at residues N567 and N624. A linker region spans residues 579-628 (KPIYTPSHPKEESFLSQCPIKSVSSDLGCTCDPSIVPIMDFEKQFNLTTD). Residues 635-906 (SMTVPNGRPR…THLPIFSQED (272 aa)) are nuclease-like domain. The Ca(2+) site is built by D781, D783, D785, R787, and D789.

Belongs to the nucleotide pyrophosphatase/phosphodiesterase family. As to quaternary structure, ectonucleotide pyrophosphatase/phosphodiesterase family member 1: Homodimer. Ectonucleotide pyrophosphatase/phosphodiesterase family member 1: Interacts with INSR; leading to inhibit INSR autophosphorylation and subsequent activation of INSR kinase activity. Ectonucleotide pyrophosphatase/phosphodiesterase family member 1, secreted form: Monomeric. Zn(2+) is required as a cofactor. Post-translationally, the secreted form is produced through cleavage at Lys-85 by intracellular processing.

It localises to the cell membrane. The protein resides in the basolateral cell membrane. Its subcellular location is the secreted. The enzyme catalyses Hydrolytically removes 5'-nucleotides successively from the 3'-hydroxy termini of 3'-hydroxy-terminated oligonucleotides.. It catalyses the reaction a ribonucleoside 5'-triphosphate + H2O = a ribonucleoside 5'-phosphate + diphosphate + H(+). The catalysed reaction is ATP + H2O = AMP + diphosphate + H(+). It carries out the reaction UTP + H2O = UMP + diphosphate + H(+). The enzyme catalyses GTP + H2O = GMP + diphosphate + H(+). It catalyses the reaction CTP + H2O = CMP + diphosphate + H(+). The catalysed reaction is 2',3'-cGAMP + 2 H2O = GMP + AMP + 2 H(+). It carries out the reaction P(1),P(4)-bis(5'-adenosyl) tetraphosphate + H2O = AMP + ATP + 2 H(+). The enzyme catalyses 3',5'-cyclic AMP + H2O = AMP + H(+). With respect to regulation, at low concentrations of ATP, a phosphorylated intermediate is formed which inhibits further hydrolysis. Functionally, nucleotide pyrophosphatase that generates diphosphate (PPi) and functions in bone mineralization and soft tissue calcification by regulating pyrophosphate levels. PPi inhibits bone mineralization and soft tissue calcification by binding to nascent hydroxyapatite crystals, thereby preventing further growth of these crystals. Preferentially hydrolyzes ATP, but can also hydrolyze other nucleoside 5' triphosphates such as GTP, CTP and UTP to their corresponding monophosphates with release of pyrophosphate, as well as diadenosine polyphosphates, and also 3',5'-cAMP to AMP. May also be involved in the regulation of the availability of nucleotide sugars in the endoplasmic reticulum and Golgi, and the regulation of purinergic signaling. Inhibits ectopic joint calcification and maintains articular chondrocytes by repressing hedgehog signaling; it is however unclear whether hedgehog inhibition is direct or indirect. Appears to modulate insulin sensitivity. Also involved in melanogenesis. Also able to hydrolyze 2',3'-cGAMP (cyclic GMP-AMP), a second messenger that activates TMEM173/STING and triggers type-I interferon production. 2',3'-cGAMP degradation takes place in the lumen or extracellular space, and not in the cytosol where it is produced; the role of 2',3'-cGAMP hydrolysis is therefore unclear. Not able to hydrolyze the 2',3'-cGAMP linkage isomer 3'-3'-cGAMP. This Rattus norvegicus (Rat) protein is Ectonucleotide pyrophosphatase/phosphodiesterase family member 1.